The sequence spans 32 residues: Dermaseptin-8 (32 aa).

The residue at position 32 (Gln32) is a Glutamine amide.

Expressed by the skin glands.

It is found in the secreted. Functionally, antimicrobial peptide, active against the Gram-positive bacterium S.aureus, and the Gram-negative bacteriun E.coli. Has hemolytic activity at 432 uM. The sequence is that of Dermaseptin-8 from Phyllomedusa tarsius (Brownbelly leaf frog).